The chain runs to 133 residues: Antifungal protein ginkbilobin-like protein 2 (133 aa).

An N-terminal signal peptide occupies residues 1–24 (MSMGSFGFALAVMVLAVLVASAAG). In terms of domain architecture, Gnk2-homologous spans 28–133 (TNLVSSACNG…CFIRYEQYSI (106 aa)). Asn36 lines the alpha-D-mannopyranose pocket. Intrachain disulfides connect Cys87–Cys96 and Cys99–Cys124. Residues Arg118 and Glu129 each coordinate alpha-D-mannopyranose.

Functionally, exerts antifungal activity through its carbohydrate-binding specificity. This is Antifungal protein ginkbilobin-like protein 2 from Picea glauca (White spruce).